The sequence spans 730 residues: Hepatocyte growth factor (730 aa).

Residues 1 to 31 form the signal peptide; that stretch reads MWVTRLLPVLLLQHVLLHLLLLPIAIPYAEG. At Gln-32 the chain carries Pyrrolidone carboxylic acid. Residues 37–123 form the PAN domain; the sequence is NTLHEFKRSA…HEFDLYENKD (87 aa). 8 disulfide bridges follow: Cys-70–Cys-96, Cys-74–Cys-84, Cys-128–Cys-206, Cys-149–Cys-189, Cys-177–Cys-201, Cys-211–Cys-288, Cys-232–Cys-271, and Cys-260–Cys-283. Kringle domains are found at residues 128 to 206 and 211 to 288; these read CIIG…IPQC and CMTC…IKMC. N-linked (GlcNAc...) asparagine glycosylation occurs at Asn-294. Disulfide bonds link Cys-305–Cys-383, Cys-326–Cys-365, Cys-354–Cys-377, Cys-391–Cys-469, Cys-412–Cys-452, Cys-440–Cys-464, Cys-487–Cys-606, Cys-519–Cys-535, Cys-614–Cys-681, Cys-644–Cys-660, and Cys-671–Cys-699. 2 Kringle domains span residues 305–383 and 391–469; these read CIQG…IPKC and CYRG…ISRC. The 229-residue stretch at 495-723 folds into the Peptidase S1 domain; that stretch reads VVNGIPTRTN…YAKWIHKIIL (229 aa). Residues Asn-568 and Asn-655 are each glycosylated (N-linked (GlcNAc...) asparagine).

It belongs to the peptidase S1 family. Plasminogen subfamily. As to quaternary structure, dimer of an alpha chain and a beta chain linked by a disulfide bond. Interacts with SRPX2; the interaction increases HGF mitogenic activity. In terms of processing, the single-chain precursor undergoes proteolytic processing by TMPRSS13 resulting in an active two-chain form. The single-chain precursor undergoes proteolytic processing by HGFAC resulting in an active two-chain form.

Its function is as follows. Potent mitogen for mature parenchymal hepatocyte cells, seems to be a hepatotrophic factor, and acts as a growth factor for a broad spectrum of tissues and cell types. Activating ligand for the receptor tyrosine kinase MET by binding to it and promoting its dimerization. Activates MAPK signaling following TMPRSS13 cleavage and activation. The protein is Hepatocyte growth factor (HGF) of Bos taurus (Bovine).